The sequence spans 203 residues: Large ribosomal subunit protein eL15 (203 aa).

Residues 166 to 203 (ATGKKSRGINKGHRYNNTRSGRRHTWKRQNTQSYWRYR) form a disordered region. Over residues 169–192 (KKSRGINKGHRYNNTRSGRRHTWK) the composition is skewed to basic residues. A compositionally biased stretch (polar residues) spans 193 to 203 (RQNTQSYWRYR).

The protein belongs to the eukaryotic ribosomal protein eL15 family.

The polypeptide is Large ribosomal subunit protein eL15 (rpl15) (Aspergillus niger).